Consider the following 702-residue polypeptide: DNA ligase (702 aa).

NAD(+) is bound by residues 32–36 (DAEYD) and 81–82 (SL). The tract at residues 104–125 (AESSAQKASLNPLVRDSDQKNR) is disordered. Glutamate 139 provides a ligand contact to NAD(+). The active-site N6-AMP-lysine intermediate is lysine 141. Arginine 162, glutamate 199, lysine 316, and lysine 340 together coordinate NAD(+). Zn(2+) is bound by residues cysteine 434, cysteine 437, cysteine 452, and cysteine 458. The region spanning 616–702 (KPNHPFRDKT…KALKPEGTKV (87 aa)) is the BRCT domain.

It belongs to the NAD-dependent DNA ligase family. LigA subfamily. Mg(2+) is required as a cofactor. Mn(2+) serves as cofactor.

It catalyses the reaction NAD(+) + (deoxyribonucleotide)n-3'-hydroxyl + 5'-phospho-(deoxyribonucleotide)m = (deoxyribonucleotide)n+m + AMP + beta-nicotinamide D-nucleotide.. Functionally, DNA ligase that catalyzes the formation of phosphodiester linkages between 5'-phosphoryl and 3'-hydroxyl groups in double-stranded DNA using NAD as a coenzyme and as the energy source for the reaction. It is essential for DNA replication and repair of damaged DNA. The chain is DNA ligase from Hamiltonella defensa subsp. Acyrthosiphon pisum (strain 5AT).